Here is a 455-residue protein sequence, read N- to C-terminus: Acetylcholinesterase collagenic tail peptide (455 aa).

Residues 1-22 (MVVLNPMTLGIYLQLFFLSIVS) form the signal peptide. The segment at 51–67 (CCLLTPPPPPLFPPPFF) is PRAD. The disordered stretch occupies residues 90–282 (QSPCMQGSLG…QLIMGPKGER (193 aa)). Collagen-like domains lie at 96-269 (GSLG…PGPP) and 277-291 (GPKGERGFPGPPGRC). A compositionally biased stretch (pro residues) spans 101 to 112 (PGPPGPQGPPGL). The span at 118–127 (PKGEKGELGR) shows a compositional bias: basic and acidic residues. The segment at 130-133 (RKGR) is heparan sulfate proteoglycan binding. The segment covering 134 to 152 (PGPPGVPGMPGPIGWPGPE) has biased composition (pro residues). A compositionally biased stretch (basic and acidic residues) spans 182–200 (RGEKGSRGEKGDLGPKGEK). The segment at 235-238 (KRGK) is heparan sulfate proteoglycan binding. Over residues 262–271 (RPGPPGPPPA) the composition is skewed to pro residues.

Belongs to the COLQ family. In terms of assembly, homotrimer. Component of the asymmetric form of AChE, a disulfide-bonded oligomer composed of the collagenic subunits (Q) and a variable number of asymmetric catalytic subunits (T). The N-terminal of a collagenic subunit (Q) associates with the C-terminal of a catalytic subunit (T). In terms of processing, the triple-helical tail is stabilized by disulfide bonds at each end. In terms of tissue distribution, found at the end plate of skeletal muscle.

It is found in the synapse. Its function is as follows. Anchors the catalytic subunits of asymmetric AChE to the synaptic basal lamina. In Homo sapiens (Human), this protein is Acetylcholinesterase collagenic tail peptide (COLQ).